The sequence spans 199 residues: UPF0301 protein Vapar_4617 (199 aa).

This sequence belongs to the UPF0301 (AlgH) family.

This Variovorax paradoxus (strain S110) protein is UPF0301 protein Vapar_4617.